The chain runs to 209 residues: Ubiquitin-conjugating enzyme E2 S (209 aa).

The UBC core domain maps to 14–160; the sequence is QTIRQVMREL…ARMMTEIHAQ (147 aa). Cys-98 serves as the catalytic Glycyl thioester intermediate. Residues 168–194 are disordered; sequence AVGDAKDDGGPSTKKHAGLDKKLQDKK. Residues 184 to 194 are compositionally biased toward basic and acidic residues; it reads AGLDKKLQDKK.

Belongs to the ubiquitin-conjugating enzyme family.

The catalysed reaction is S-ubiquitinyl-[E1 ubiquitin-activating enzyme]-L-cysteine + [E2 ubiquitin-conjugating enzyme]-L-cysteine = [E1 ubiquitin-activating enzyme]-L-cysteine + S-ubiquitinyl-[E2 ubiquitin-conjugating enzyme]-L-cysteine.. It functions in the pathway protein modification; protein ubiquitination. Catalyzes the covalent attachment of ubiquitin to other proteins. Acts as an essential factor of the anaphase promoting complex/cyclosome (APC/C), a cell cycle-regulated ubiquitin ligase that controls progression through mitosis. Acts by specifically elongating polyubiquitin chains initiated by the E2 enzyme vih/UbcH10 on APC/C substrates, enhancing the degradation of APC/C substrates by the proteasome and promoting mitotic exit. The protein is Ubiquitin-conjugating enzyme E2 S of Drosophila melanogaster (Fruit fly).